A 533-amino-acid polypeptide reads, in one-letter code: CTP synthase (533 aa).

The tract at residues 1 to 269 is amidoligase domain; it reads MKKNLKILVI…HEILSSKLNI (269 aa). Residue serine 16 coordinates CTP. Residue serine 16 participates in UTP binding. ATP is bound by residues 17–22 and aspartate 73; that span reads GIGKGV. Residues aspartate 73 and glutamate 143 each coordinate Mg(2+). Residues 150–152, 190–195, and lysine 226 contribute to the CTP site; these read DME and KSKPTQ. Residues 190–195 and lysine 226 contribute to the UTP site; that span reads KSKPTQ. One can recognise a Glutamine amidotransferase type-1 domain in the interval 304-533; sequence YAELDDSYAS…LFLGLIKACI (230 aa). Glycine 355 is a binding site for L-glutamine. The active-site Nucleophile; for glutamine hydrolysis is the cysteine 382. L-glutamine is bound by residues 383–386, glutamate 406, and arginine 466; that span reads LGLQ. Catalysis depends on residues histidine 511 and glutamate 513.

Belongs to the CTP synthase family. Homotetramer.

It carries out the reaction UTP + L-glutamine + ATP + H2O = CTP + L-glutamate + ADP + phosphate + 2 H(+). The catalysed reaction is L-glutamine + H2O = L-glutamate + NH4(+). The enzyme catalyses UTP + NH4(+) + ATP = CTP + ADP + phosphate + 2 H(+). It participates in pyrimidine metabolism; CTP biosynthesis via de novo pathway; CTP from UDP: step 2/2. With respect to regulation, allosterically activated by GTP, when glutamine is the substrate; GTP has no effect on the reaction when ammonia is the substrate. The allosteric effector GTP functions by stabilizing the protein conformation that binds the tetrahedral intermediate(s) formed during glutamine hydrolysis. Inhibited by the product CTP, via allosteric rather than competitive inhibition. Functionally, catalyzes the ATP-dependent amination of UTP to CTP with either L-glutamine or ammonia as the source of nitrogen. Regulates intracellular CTP levels through interactions with the four ribonucleotide triphosphates. The protein is CTP synthase of Borreliella afzelii (strain PKo) (Borrelia afzelii).